Consider the following 336-residue polypeptide: Dihydroorotate dehydrogenase (quinone) (336 aa).

FMN is bound by residues 62 to 66 and T86; that span reads AGLDK. Substrate is bound at residue K66. A substrate-binding site is contributed by 111 to 115; that stretch reads NRMGF. FMN is bound by residues N139 and N172. N172 provides a ligand contact to substrate. The active-site Nucleophile is the S175. N177 lines the substrate pocket. Residues K217 and T245 each coordinate FMN. 246–247 contacts substrate; the sequence is NT. Residues G268, G297, and 318–319 contribute to the FMN site; that span reads YS.

This sequence belongs to the dihydroorotate dehydrogenase family. Type 2 subfamily. In terms of assembly, monomer. It depends on FMN as a cofactor.

Its subcellular location is the cell membrane. It carries out the reaction (S)-dihydroorotate + a quinone = orotate + a quinol. It functions in the pathway pyrimidine metabolism; UMP biosynthesis via de novo pathway; orotate from (S)-dihydroorotate (quinone route): step 1/1. Its function is as follows. Catalyzes the conversion of dihydroorotate to orotate with quinone as electron acceptor. This chain is Dihydroorotate dehydrogenase (quinone), found in Aliivibrio fischeri (strain MJ11) (Vibrio fischeri).